Consider the following 255-residue polypeptide: Ribosomal RNA small subunit methyltransferase A (255 aa).

S-adenosyl-L-methionine-binding residues include Asn-12, Leu-14, Gly-39, Glu-60, Asp-84, and Asn-106.

The protein belongs to the class I-like SAM-binding methyltransferase superfamily. rRNA adenine N(6)-methyltransferase family. RsmA subfamily.

Its subcellular location is the cytoplasm. The enzyme catalyses adenosine(1518)/adenosine(1519) in 16S rRNA + 4 S-adenosyl-L-methionine = N(6)-dimethyladenosine(1518)/N(6)-dimethyladenosine(1519) in 16S rRNA + 4 S-adenosyl-L-homocysteine + 4 H(+). Functionally, specifically dimethylates two adjacent adenosines (A1518 and A1519) in the loop of a conserved hairpin near the 3'-end of 16S rRNA in the 30S particle. May play a critical role in biogenesis of 30S subunits. This chain is Ribosomal RNA small subunit methyltransferase A, found in Janthinobacterium sp. (strain Marseille) (Minibacterium massiliensis).